The primary structure comprises 1614 residues: Adenylate cyclase type 10 (1614 aa).

Guanylate cyclase domains are found at residues 42–179 (VLMF…RLAQ) and 293–418 (TIVF…ARMM). Positions 47 and 48 each coordinate Mg(2+). 47–52 (DISGFT) provides a ligand contact to ATP. K95 is a hydrogencarbonate binding site. D99 is a binding site for Mg(2+). ATP contacts are provided by D99 and K144. Hydrogencarbonate-binding residues include V167, R176, and M337. ATP-binding positions include V406 and 412 to 416 (NIAAR).

It belongs to the adenylyl cyclase class-4/guanylyl cyclase family. It depends on Mg(2+) as a cofactor. Mn(2+) is required as a cofactor. Expressed in testis.

The protein resides in the cell membrane. It localises to the cytoplasm. It is found in the cytoskeleton. The protein localises to the perinuclear region. Its subcellular location is the nucleus. The protein resides in the cell projection. It localises to the cilium. It is found in the mitochondrion. The enzyme catalyses ATP = 3',5'-cyclic AMP + diphosphate. With respect to regulation, activated by manganese or magnesium ions. In the presence of magnesium ions, the enzyme is activated by bicarbonate. Calcium mildly increases the enzyme activity, also in the presence of magnesium ions. In terms of biological role, catalyzes the formation of the signaling molecule cAMP. May function as sensor that mediates responses to changes in cellular bicarbonate and CO(2) levels. Has a critical role in mammalian spermatogenesis by producing the cAMP which regulates cAMP-responsive nuclear factors indispensable for sperm maturation in the epididymis. Induces capacitation, the maturational process that sperm undergo prior to fertilization. Involved in ciliary beat regulation. The polypeptide is Adenylate cyclase type 10 (Adcy10) (Mus musculus (Mouse)).